Reading from the N-terminus, the 207-residue chain is MTKTLYYRKLGRTSAHRQALLRNLVTSLVKHESIQTTWAKAKEAQRFAEKLITMAKRANPQNNRKGLAEGMVFEKETTLKKVFDVLVPRYNGRRCGYTRLLKLPPRSTDNAPMGVLEFVDGPKDIRFHMTAKTVGICLAQQKALTPITRKNIHKVLLFRKNGKAEFDQLVQKEKESEHARLKEDHEDEKTVKKDWKRGDPIPRPTYI.

The span at 173–200 (EKESEHARLKEDHEDEKTVKKDWKRGDP) shows a compositional bias: basic and acidic residues. The interval 173–207 (EKESEHARLKEDHEDEKTVKKDWKRGDPIPRPTYI) is disordered.

Belongs to the bacterial ribosomal protein bL17 family. As to quaternary structure, component of the mitochondrial large ribosomal subunit (mt-LSU). Mature yeast 74S mitochondrial ribosomes consist of a small (37S) and a large (54S) subunit. The 37S small subunit contains a 15S ribosomal RNA (15S mt-rRNA) and at least 32 different proteins. The 54S large subunit contains a 21S rRNA (21S mt-rRNA) and at least 45 different proteins.

Its subcellular location is the mitochondrion. Its function is as follows. Component of the mitochondrial ribosome (mitoribosome), a dedicated translation machinery responsible for the synthesis of mitochondrial genome-encoded proteins, including at least some of the essential transmembrane subunits of the mitochondrial respiratory chain. The mitoribosomes are attached to the mitochondrial inner membrane and translation products are cotranslationally integrated into the membrane. In Schizosaccharomyces pombe (strain 972 / ATCC 24843) (Fission yeast), this protein is Large ribosomal subunit protein bL17m (mrpl8).